The following is a 229-amino-acid chain: IVMLKNDNVEQKHINIKIADIDIDLFPKSGNIGVKVNGVEIPMENLPYYHPTVKIQIRQKGEGISVVAPSLGLSEVYMDSKSWKVEVVDWMKGQTCGLCGKADGEIKQEFRMPNGHLTKNAVTYAHSWILAAESCRDNSECRIKLDSVELEKRAVIYGQESRCFSVEPVLRCLPGCFPVKTTSVTVGFHCVAADSNVNKSEVLRGIQGKRVDLREKADAHLACSCTAQC.

The VWFD domain occupies 1 to 136; sequence IVMLKNDNVE…SWILAAESCR (136 aa). Asn-198 is a glycosylation site (N-linked (GlcNAc...) asparagine).

In terms of tissue distribution, expressed in liver, ovary and, to a lesser extent, in muscle, intestine, skin, kidney and heart.

Its function is as follows. Precursor of the egg-yolk proteins that are sources of nutrients during early development of oviparous organisms. Functionally, probably binds tetrodotoxin in the ovary. This is Vitellogenin from Takifugu pardalis (Panther puffer).